The chain runs to 79 residues: Acyl carrier protein (79 aa).

The region spanning 1–76 is the Carrier domain; the sequence is MEVFEEVRDV…DVVTYIENLN (76 aa). At serine 36 the chain carries O-(pantetheine 4'-phosphoryl)serine.

Belongs to the acyl carrier protein (ACP) family. 4'-phosphopantetheine is transferred from CoA to a specific serine of apo-ACP by AcpS. This modification is essential for activity because fatty acids are bound in thioester linkage to the sulfhydryl of the prosthetic group.

It is found in the cytoplasm. The protein operates within lipid metabolism; fatty acid biosynthesis. Functionally, carrier of the growing fatty acid chain in fatty acid biosynthesis. This chain is Acyl carrier protein, found in Campylobacter hominis (strain ATCC BAA-381 / DSM 21671 / CCUG 45161 / LMG 19568 / NCTC 13146 / CH001A).